A 302-amino-acid chain; its full sequence is tRNA pseudouridine synthase B (302 aa).

The Nucleophile role is filled by D47.

The protein belongs to the pseudouridine synthase TruB family. Type 1 subfamily.

It catalyses the reaction uridine(55) in tRNA = pseudouridine(55) in tRNA. Its function is as follows. Responsible for synthesis of pseudouridine from uracil-55 in the psi GC loop of transfer RNAs. In Methylobacillus flagellatus (strain ATCC 51484 / DSM 6875 / VKM B-1610 / KT), this protein is tRNA pseudouridine synthase B.